The primary structure comprises 328 residues: GTP 3',8-cyclase (328 aa).

Residues 1–229 enclose the Radical SAM core domain; it reads MNQVDYLRIS…ESQVRGAGPA (229 aa). A GTP-binding site is contributed by R8. Residues C15 and C19 each coordinate [4Fe-4S] cluster. Y21 contributes to the S-adenosyl-L-methionine binding site. C22 contributes to the [4Fe-4S] cluster binding site. R60 contributes to the GTP binding site. G64 serves as a coordination point for S-adenosyl-L-methionine. GTP is bound at residue T91. Position 115 (S115) interacts with S-adenosyl-L-methionine. K155 contributes to the GTP binding site. S-adenosyl-L-methionine is bound at residue M189. [4Fe-4S] cluster is bound by residues C252 and C255. Residue 257-259 participates in GTP binding; that stretch reads RMR. Position 269 (C269) interacts with [4Fe-4S] cluster.

Belongs to the radical SAM superfamily. MoaA family. Monomer and homodimer. It depends on [4Fe-4S] cluster as a cofactor.

The catalysed reaction is GTP + AH2 + S-adenosyl-L-methionine = (8S)-3',8-cyclo-7,8-dihydroguanosine 5'-triphosphate + 5'-deoxyadenosine + L-methionine + A + H(+). It functions in the pathway cofactor biosynthesis; molybdopterin biosynthesis. Catalyzes the cyclization of GTP to (8S)-3',8-cyclo-7,8-dihydroguanosine 5'-triphosphate. This Nostoc punctiforme (strain ATCC 29133 / PCC 73102) protein is GTP 3',8-cyclase.